The following is a 295-amino-acid chain: Malonyl-[acyl-carrier protein] O-methyltransferase (295 aa).

The protein belongs to the methyltransferase superfamily.

It carries out the reaction malonyl-[ACP] + S-adenosyl-L-methionine = malonyl-[ACP] methyl ester + S-adenosyl-L-homocysteine. It participates in cofactor biosynthesis; biotin biosynthesis. Functionally, converts the free carboxyl group of a malonyl-thioester to its methyl ester by transfer of a methyl group from S-adenosyl-L-methionine (SAM). It allows to synthesize pimeloyl-ACP via the fatty acid synthetic pathway. This chain is Malonyl-[acyl-carrier protein] O-methyltransferase, found in Halorhodospira halophila (strain DSM 244 / SL1) (Ectothiorhodospira halophila (strain DSM 244 / SL1)).